A 187-amino-acid polypeptide reads, in one-letter code: Nodulin-related protein 1 (187 aa).

Methionine 1 is modified (N-acetylmethionine). Disordered stretches follow at residues 1–66 (MDFF…ATNA) and 132–176 (YETS…HGFG). Residues 7 to 48 (QVKKKFSDKKPESSDPEPNHNKNKPGHTEPTTHKPGHGEPTT) show a composition bias toward basic and acidic residues. Residues 142 to 158 (GGTGSHGNVGGHGGGAG) show a composition bias toward gly residues.

In terms of assembly, interacts with RPS2. As to expression, expressed in roots, leaves, flowers and siliques.

Prevents accumulation of abscisic acid (ABA) after heat treatment, thus reducing thermotolerance. May be a negative regulator of the ABA signaling/synthesis pathway. Required for defense responses against avirulent bacteria such as P.syringae pv. tomato DC3000 (avrRpt2). The protein is Nodulin-related protein 1 of Arabidopsis thaliana (Mouse-ear cress).